We begin with the raw amino-acid sequence, 1383 residues long: NPC intracellular cholesterol transporter 1 homolog 1 (1383 aa).

A signal peptide spans 1-20 (MKQLLIFCLLFGSIFHHGDA). 8 cysteine pairs are disulfide-bonded: C22–C76, C28–C39, C65–C111, C77–C115, C99–C246, C102–C167, C182–C187, and C235–C251. N42 is a glycosylation site (N-linked (GlcNAc...) asparagine). A glycan (N-linked (GlcNAc...) asparagine) is linked at N231. 2 helical membrane-spanning segments follow: residues 282–302 (IFVM…GFVF) and 353–373 (PKSH…GMIY). N447 carries an N-linked (GlcNAc...) asparagine glycan. Intrachain disulfides connect C464–C474 and C526–C541. The N-linked (GlcNAc...) asparagine glycan is linked to N558. Helical transmembrane passes span 627–647 (EIVT…FSLG), 665–685 (ICLG…SWGI), 697–717 (ALVV…FMVV), 746–766 (TMPA…IGGF), 780–800 (GLAV…LFVW), and 856–876 (IITG…SSKI). Residues 627 to 800 (EIVTVVIALA…CTIFLALFVW (174 aa)) form the SSD domain. 4 disulfide bridges follow: C929–C934, C976–C1046, C977–C1005, and C988–C1002. N-linked (GlcNAc...) asparagine glycosylation is found at N993 and N1082. Helical transmembrane passes span 1126–1146 (IMPI…GIIC), 1157–1177 (ACAV…MYIF), 1179–1199 (IPVN…LIEF), 1226–1246 (IGPI…MFLS), and 1260–1280 (LFLI…PILL).

It belongs to the patched family.

It localises to the membrane. It catalyses the reaction cholesterol(in) = cholesterol(out). Involved in the uptake or utilization of cholesterol. Ncr-1 and ncr-2 act redundantly to prevent dauer larva formation under favorable growth conditions, and are required for the normal functioning of ADF, ASI and ASG neurons. The polypeptide is NPC intracellular cholesterol transporter 1 homolog 1 (Caenorhabditis elegans).